The following is a 274-amino-acid chain: Penicillin-insensitive murein endopeptidase (274 aa).

An N-terminal signal peptide occupies residues 1-19; it reads MKKTALALLALLVSSASLA. Cystine bridges form between Cys-44–Cys-265, Cys-187–Cys-235, and Cys-216–Cys-223. Zn(2+)-binding residues include His-110, His-113, Asp-120, Asp-147, His-150, and His-211. A disordered region spans residues 225-274; it reads DQPLPPPGDGCGAELQSWFEPPEPGTTKPEKKTPPPLPPSCQALLDEHVL.

It belongs to the peptidase M74 family. As to quaternary structure, dimer. It depends on Zn(2+) as a cofactor.

It localises to the periplasm. In terms of biological role, murein endopeptidase that cleaves the D-alanyl-meso-2,6-diamino-pimelyl amide bond that connects peptidoglycan strands. Likely plays a role in the removal of murein from the sacculus. In Citrobacter koseri (strain ATCC BAA-895 / CDC 4225-83 / SGSC4696), this protein is Penicillin-insensitive murein endopeptidase.